We begin with the raw amino-acid sequence, 145 residues long: Holo-[acyl-carrier-protein] synthase (145 aa).

Residues aspartate 8 and glutamate 59 each coordinate Mg(2+).

This sequence belongs to the P-Pant transferase superfamily. AcpS family. Mg(2+) is required as a cofactor.

It is found in the cytoplasm. The enzyme catalyses apo-[ACP] + CoA = holo-[ACP] + adenosine 3',5'-bisphosphate + H(+). Functionally, transfers the 4'-phosphopantetheine moiety from coenzyme A to a Ser of acyl-carrier-protein. In Granulibacter bethesdensis (strain ATCC BAA-1260 / CGDNIH1), this protein is Holo-[acyl-carrier-protein] synthase.